The sequence spans 174 residues: Gamma-crystallin M3 (174 aa).

2 Beta/gamma crystallin 'Greek key' domains span residues 2–40 (GKII…RVES) and 41–82 (GCFV…RMVP). Residues 83–87 (QYRGP) form a connecting peptide region. 2 consecutive Beta/gamma crystallin 'Greek key' domains span residues 88 to 128 (YRMR…HVMD) and 129 to 171 (GHWL…RRIM).

The protein belongs to the beta/gamma-crystallin family. In terms of assembly, monomer.

Crystallins are the dominant structural components of the vertebrate eye lens. The chain is Gamma-crystallin M3 from Cyprinus carpio (Common carp).